The primary structure comprises 154 residues: Egg-lysin (154 aa).

Residues 1–18 (MKLLVLWVFAMMATVAMS) form the signal peptide.

In terms of assembly, monomer. Homodimer. Molecules associate into dimers and then rapidly dissociate again. Interacts (as a monomer) with the egg vitelline layer protein VERL (via VERL repeats); each VERL chain can bind multiple copies of lysin. Sperm.

It is found in the cytoplasmic vesicle. It localises to the secretory vesicle. Its subcellular location is the acrosome lumen. In terms of biological role, creates a 3 um hole in the egg vitelline layer through which the sperm passes. Does not have enzyme activity. Species-specific interaction between the sperm protein lysin and the egg protein VERL exposes a basic surface on lysin that may dissociate the egg vitelline layer via electrostatic repulsion. Plays a role in ensuring species-specific fertilization. This is Egg-lysin from Haliotis fulgens (Green abalone).